Reading from the N-terminus, the 116-residue chain is CDKN2AIP N-terminal-like protein (116 aa).

Met-1 carries the N-acetylmethionine modification. The region spanning 24 to 116 is the XRN2-binding (XTBD) domain; that stretch reads AEQFRSYSES…RSELMRKHQS (93 aa).

It belongs to the CARF family. As to quaternary structure, interacts with XRN2; the interaction is direct.

The chain is CDKN2AIP N-terminal-like protein (Cdkn2aipnl) from Mus musculus (Mouse).